The sequence spans 325 residues: Urease accessory protein UreD (325 aa).

This sequence belongs to the UreD family. In terms of assembly, ureD, UreF and UreG form a complex that acts as a GTP-hydrolysis-dependent molecular chaperone, activating the urease apoprotein by helping to assemble the nickel containing metallocenter of UreC. The UreE protein probably delivers the nickel.

The protein resides in the cytoplasm. In terms of biological role, required for maturation of urease via the functional incorporation of the urease nickel metallocenter. Functionally, expression of the urease operon increases the likelihood of bacterial survival by contributing to acid resistance in vitro and in vivo in BALB/c mice. Y.enterocolitica enters the body via an oral path and must survive the acidic stomach before being able to colonize the intestinal mucosa. In Yersinia enterocolitica, this protein is Urease accessory protein UreD.